A 455-amino-acid chain; its full sequence is GTPase Der (455 aa).

2 consecutive EngA-type G domains span residues 4–169 (PVVA…PPKS) and 178–353 (IQLA…EQHR). Residues 10-17 (GRPNVGKS), 57-61 (DTGGL), 120-123 (NKCE), 184-191 (GRPNVGKS), 231-235 (DTAGI), and 296-299 (NKWD) contribute to the GTP site. Positions 354–439 (RRVSTSVVNE…PLKLFWRGKQ (86 aa)) constitute a KH-like domain.

The protein belongs to the TRAFAC class TrmE-Era-EngA-EngB-Septin-like GTPase superfamily. EngA (Der) GTPase family. As to quaternary structure, associates with the 50S ribosomal subunit.

Functionally, GTPase that plays an essential role in the late steps of ribosome biogenesis. The polypeptide is GTPase Der (Synechococcus sp. (strain WH7803)).